Here is a 513-residue protein sequence, read N- to C-terminus: Cyclin-dependent kinase C-2 (513 aa).

Positions 25–325 (FEKLEQIGEG…AKDALDAEYF (301 aa)) constitute a Protein kinase domain. Residues 31 to 39 (IGEGTYGQV) and K54 contribute to the ATP site. The residue at position 35 (T35) is a Phosphothreonine. Y36 carries the phosphotyrosine modification. D164 functions as the Proton acceptor in the catalytic mechanism. Residue S191 is modified to Phosphoserine. T198 carries the phosphothreonine modification. Over residues 336–348 (SLPKYEASHEFQT) the composition is skewed to basic and acidic residues. The tract at residues 336–513 (SLPKYEASHE…RNQQQYGNWQ (178 aa)) is disordered. Residues 417-433 (PNRYPQGGNQGGYNPNR) show a composition bias toward low complexity. Composition is skewed to gly residues over residues 457 to 478 (GGGMGGAGGPRGGGGSGYGVGG) and 485 to 494 (GPYGASGPGR). A compositionally biased stretch (polar residues) spans 497-513 (NYNQGGSRNQQQYGNWQ).

It belongs to the protein kinase superfamily. CMGC Ser/Thr protein kinase family. CDC2/CDKX subfamily.

The catalysed reaction is L-seryl-[protein] + ATP = O-phospho-L-seryl-[protein] + ADP + H(+). It catalyses the reaction L-threonyl-[protein] + ATP = O-phospho-L-threonyl-[protein] + ADP + H(+). The enzyme catalyses [DNA-directed RNA polymerase] + ATP = phospho-[DNA-directed RNA polymerase] + ADP + H(+). The sequence is that of Cyclin-dependent kinase C-2 (CDKC-2) from Oryza sativa subsp. japonica (Rice).